The primary structure comprises 142 residues: Large ribosomal subunit protein uL11 (142 aa).

This sequence belongs to the universal ribosomal protein uL11 family. As to quaternary structure, part of the ribosomal stalk of the 50S ribosomal subunit. Interacts with L10 and the large rRNA to form the base of the stalk. L10 forms an elongated spine to which L12 dimers bind in a sequential fashion forming a multimeric L10(L12)X complex. In terms of processing, one or more lysine residues are methylated.

Functionally, forms part of the ribosomal stalk which helps the ribosome interact with GTP-bound translation factors. The sequence is that of Large ribosomal subunit protein uL11 from Desulfitobacterium hafniense (strain DSM 10664 / DCB-2).